The primary structure comprises 404 residues: 2,3-bisphosphoglycerate-independent phosphoglycerate mutase (404 aa).

A disordered region spans residues 155–183 (LSDMIGDSDPHREGLPPEKIRPTDPSGDR). The span at 162–183 (SDPHREGLPPEKIRPTDPSGDR) shows a compositional bias: basic and acidic residues.

This sequence belongs to the BPG-independent phosphoglycerate mutase family. A-PGAM subfamily.

The catalysed reaction is (2R)-2-phosphoglycerate = (2R)-3-phosphoglycerate. The protein operates within carbohydrate degradation; glycolysis; pyruvate from D-glyceraldehyde 3-phosphate: step 3/5. Its function is as follows. Catalyzes the interconversion of 2-phosphoglycerate and 3-phosphoglycerate. This is 2,3-bisphosphoglycerate-independent phosphoglycerate mutase from Thermoplasma acidophilum (strain ATCC 25905 / DSM 1728 / JCM 9062 / NBRC 15155 / AMRC-C165).